The following is a 204-amino-acid chain: Ras-related protein Rab-1D (204 aa).

Residues Gly17 to Cys25, Trp35 to Thr42, Asp65 to Gln69, Asn123 to Asp126, and Ser153 to Lys155 contribute to the GTP site. The short motif at His39 to Phe47 is the Effector region element. Positions Pro182–Ser191 are enriched in basic and acidic residues. A disordered region spans residues Pro182–Cys204. The segment covering Lys192–Cys204 has biased composition (basic residues). Residue Cys204 is the site of S-geranylgeranyl cysteine attachment.

Belongs to the small GTPase superfamily. Rab family.

The protein resides in the cell membrane. The polypeptide is Ras-related protein Rab-1D (rab1D) (Dictyostelium discoideum (Social amoeba)).